The following is a 539-amino-acid chain: Eukaryotic translation initiation factor 3 subunit L (539 aa).

The region spanning 306–514 is the PCI domain; the sequence is TFSDILLYIQ…IHIADTKVSH (209 aa).

The protein belongs to the eIF-3 subunit L family. In terms of assembly, component of the eukaryotic translation initiation factor 3 (eIF-3) complex. The eIF-3 complex interacts with pix.

The protein localises to the cytoplasm. Its function is as follows. Component of the eukaryotic translation initiation factor 3 (eIF-3) complex, which is involved in protein synthesis of a specialized repertoire of mRNAs and, together with other initiation factors, stimulates binding of mRNA and methionyl-tRNAi to the 40S ribosome. The eIF-3 complex specifically targets and initiates translation of a subset of mRNAs involved in cell proliferation. This chain is Eukaryotic translation initiation factor 3 subunit L, found in Drosophila melanogaster (Fruit fly).